We begin with the raw amino-acid sequence, 143 residues long: Peptide methionine sulfoxide reductase MsrB (143 aa).

Residues 16-139 (DAELRRRLTP…NSAALNFEAK (124 aa)) form the MsrB domain. The Zn(2+) site is built by cysteine 55, cysteine 58, cysteine 104, and cysteine 107. Residue cysteine 128 is the Nucleophile of the active site.

This sequence belongs to the MsrB Met sulfoxide reductase family. Zn(2+) is required as a cofactor.

The catalysed reaction is L-methionyl-[protein] + [thioredoxin]-disulfide + H2O = L-methionyl-(R)-S-oxide-[protein] + [thioredoxin]-dithiol. This chain is Peptide methionine sulfoxide reductase MsrB, found in Burkholderia mallei (strain NCTC 10229).